The chain runs to 235 residues: Nuclear egress protein 2 (235 aa).

The Perinuclear space portion of the chain corresponds to 1–214 (MNSTRLVYEL…IKPWTLSKKN (214 aa)). A helical membrane pass occupies residues 215–232 (IWTIILSLVAVVAIILKW). Topologically, residues 233-235 (REL) are nuclear.

The protein belongs to the herpesviridae NEC2 protein family. Forms a heterohexameric complex with NEC1. Phosphorylated.

Its subcellular location is the host nucleus inner membrane. Plays an essential role in virion nuclear egress, the first step of virion release from infected cell. Within the host nucleus, NEC1 interacts with the newly formed capsid through the vertexes and directs it to the inner nuclear membrane by associating with NEC2. Induces the budding of the capsid at the inner nuclear membrane as well as its envelopment into the perinuclear space. There, the NEC1/NEC2 complex promotes the fusion of the enveloped capsid with the outer nuclear membrane and the subsequent release of the viral capsid into the cytoplasm where it will reach the secondary budding sites in the host Golgi or trans-Golgi network. The polypeptide is Nuclear egress protein 2 (Saimiri sciureus (Common squirrel monkey)).